A 267-amino-acid chain; its full sequence is Tryptophan synthase alpha chain (267 aa).

Active-site proton acceptor residues include glutamate 47 and aspartate 58.

The protein belongs to the TrpA family. As to quaternary structure, tetramer of two alpha and two beta chains.

The enzyme catalyses (1S,2R)-1-C-(indol-3-yl)glycerol 3-phosphate + L-serine = D-glyceraldehyde 3-phosphate + L-tryptophan + H2O. The protein operates within amino-acid biosynthesis; L-tryptophan biosynthesis; L-tryptophan from chorismate: step 5/5. The alpha subunit is responsible for the aldol cleavage of indoleglycerol phosphate to indole and glyceraldehyde 3-phosphate. The protein is Tryptophan synthase alpha chain of Chlorobium phaeobacteroides (strain DSM 266 / SMG 266 / 2430).